Consider the following 223-residue polypeptide: Ribonuclease 3 (223 aa).

Residues 4–127 (LNRLEEHLGY…LMGAIYLESG (124 aa)) enclose the RNase III domain. Residue Glu-40 participates in Mg(2+) binding. Residue Asp-44 is part of the active site. The Mg(2+) site is built by Asp-113 and Glu-116. Residue Glu-116 is part of the active site. The 70-residue stretch at 154 to 223 (DYKTTLQEIT…AWKVLQGMNI (70 aa)) folds into the DRBM domain.

It belongs to the ribonuclease III family. In terms of assembly, homodimer. Mg(2+) serves as cofactor.

It is found in the cytoplasm. The catalysed reaction is Endonucleolytic cleavage to 5'-phosphomonoester.. Its function is as follows. Digests double-stranded RNA. Involved in the processing of primary rRNA transcript to yield the immediate precursors to the large and small rRNAs (23S and 16S). Processes some mRNAs, and tRNAs when they are encoded in the rRNA operon. Processes pre-crRNA and tracrRNA of type II CRISPR loci if present in the organism. This is Ribonuclease 3 from Campylobacter fetus subsp. fetus (strain 82-40).